The sequence spans 252 residues: Small ribosomal subunit protein uS2 (252 aa).

This sequence belongs to the universal ribosomal protein uS2 family.

In Alcanivorax borkumensis (strain ATCC 700651 / DSM 11573 / NCIMB 13689 / SK2), this protein is Small ribosomal subunit protein uS2.